The chain runs to 616 residues: MPKYRSATTTHGRNMAGARALWRATGMTDADFGKPIIAVVNSFTQFVPGHVHLRDLGKLVAEQIEAAGGVAKEFNTIAVDDGIAMGHGGMLYSLPSRELIADSVEYMVNAHCADAMVCISNCDKITPGMLMASLRLNIPVIFVSGGPMEAGKTKLSDQIIKLDLVDAMIQGADPKVSDSQSDQVERSACPTCGSCSGMFTANSMNCLTEALGLSQPGNGSLLATHADRKQLFLNAGKRIVELTKRYYEQNDESALPRNIASKAAFENAMTLDIAMGGSTNTVLHLLAAAQEAEIDFTMSDIDKLSRKVPQLCKVAPSTQKYHMEDVHRAGGVIGILGELDRAGLLNRDVKNVLGLTLPQTLEQYDVMLTQDDAVKNMFRAGPAGIRTTQAFSQDCRWDTLDDDRANGCIRSLEHAYSKDGGLAVLYGNFAENGCIVKTAGVDDSILKFTGPAKVYESQDDAVEAILGGKVVAGDVVVIRYEGPKGGPGMQEMLYPTSFLKSMGLGKACALITDGRFSGGTSGLSIGHVSPEAASGGSIGLIEDGDLIAIDIPNRGIQLQVSDAELAARREAQDARGDKAWTPKNRERQVSFALRAYASLATSADKGAVRDKSKLGG.

Residue aspartate 81 coordinates Mg(2+). Cysteine 122 is a binding site for [2Fe-2S] cluster. Residues aspartate 123 and lysine 124 each contribute to the Mg(2+) site. Lysine 124 bears the N6-carboxylysine mark. Cysteine 195 is a [2Fe-2S] cluster binding site. Mg(2+) is bound at residue glutamate 491. The Proton acceptor role is filled by serine 517.

The protein belongs to the IlvD/Edd family. Homodimer. Requires [2Fe-2S] cluster as cofactor. Mg(2+) is required as a cofactor.

It catalyses the reaction (2R)-2,3-dihydroxy-3-methylbutanoate = 3-methyl-2-oxobutanoate + H2O. The catalysed reaction is (2R,3R)-2,3-dihydroxy-3-methylpentanoate = (S)-3-methyl-2-oxopentanoate + H2O. The protein operates within amino-acid biosynthesis; L-isoleucine biosynthesis; L-isoleucine from 2-oxobutanoate: step 3/4. Its pathway is amino-acid biosynthesis; L-valine biosynthesis; L-valine from pyruvate: step 3/4. Its function is as follows. Functions in the biosynthesis of branched-chain amino acids. Catalyzes the dehydration of (2R,3R)-2,3-dihydroxy-3-methylpentanoate (2,3-dihydroxy-3-methylvalerate) into 2-oxo-3-methylpentanoate (2-oxo-3-methylvalerate) and of (2R)-2,3-dihydroxy-3-methylbutanoate (2,3-dihydroxyisovalerate) into 2-oxo-3-methylbutanoate (2-oxoisovalerate), the penultimate precursor to L-isoleucine and L-valine, respectively. The protein is Dihydroxy-acid dehydratase of Escherichia coli (strain K12 / MC4100 / BW2952).